The primary structure comprises 364 residues: Cobalt-precorrin-5B C(1)-methyltransferase (364 aa).

It belongs to the CbiD family.

The catalysed reaction is Co-precorrin-5B + S-adenosyl-L-methionine = Co-precorrin-6A + S-adenosyl-L-homocysteine. The protein operates within cofactor biosynthesis; adenosylcobalamin biosynthesis; cob(II)yrinate a,c-diamide from sirohydrochlorin (anaerobic route): step 6/10. Its function is as follows. Catalyzes the methylation of C-1 in cobalt-precorrin-5B to form cobalt-precorrin-6A. The sequence is that of Cobalt-precorrin-5B C(1)-methyltransferase from Pseudomonas putida (strain GB-1).